A 1228-amino-acid chain; its full sequence is Myosin-1 (1228 aa).

The segment at 1–27 (MAVTKRAGRRAQGGTQPAKGAQGVKKA) is disordered. The region spanning 37-716 (VGVSDLTLLS…TLFALEHMRD (680 aa)) is the Myosin motor domain. 130-137 (GESGAGKT) is a binding site for ATP. Phosphoserine is present on S358. The interval 405-487 (TIGILDIYGF…PGIFAALNDA (83 aa)) is actin-binding. IQ domains lie at 720–740 (HNMA…KTEC) and 741–768 (AIKI…SGHK). The region spanning 776 to 962 (RRTYSLIGYR…SGSVQVPPGA (187 aa)) is the TH1 domain. Disordered stretches follow at residues 953–1040 (SGSV…AESA), 1053–1109 (QSLV…PAAP), and 1169–1228 (QGGA…DDDW). Over residues 1053 to 1063 (QSLVNPRSGQG) the composition is skewed to polar residues. Residues 1064–1092 (QQQQQHHQAYQQPTAAQPAATSYSPAPAK) are compositionally biased toward low complexity. Residues 1093 to 1106 (AAPPPPPPAPPAAP) are compositionally biased toward pro residues. One can recognise an SH3 domain in the interval 1109-1170 (PAEPTYKALY…PAAYLEEVQG (62 aa)). Residues 1180 to 1194 (PTAGGASAGASLAEA) are compositionally biased toward low complexity.

The protein belongs to the TRAFAC class myosin-kinesin ATPase superfamily. Myosin family. In terms of processing, phosphorylation of the TEDS site (Ser-358) is required for the polarization of the actin cytoskeleton. Phosphorylation probably activates the myosin-I ATPase activity.

The protein resides in the cytoplasm. The protein localises to the cytoskeleton. Its subcellular location is the actin patch. Type-I myosin implicated in the organization of the actin cytoskeleton. Required for proper actin cytoskeleton polarization. At the cell cortex, assembles in patch-like structures together with proteins from the actin-polymerizing machinery and promotes actin assembly. Functions as actin nucleation-promoting factor (NPF) for the Arp2/3 complex. The polypeptide is Myosin-1 (MYO1) (Yarrowia lipolytica (strain CLIB 122 / E 150) (Yeast)).